Here is a 632-residue protein sequence, read N- to C-terminus: 2-hydroxyacyl-CoA lyase 2 (632 aa).

A helical membrane pass occupies residues 13 to 33 (LFPSFLLLACGTLVAALLGAA). Glu-98 contributes to the thiamine diphosphate binding site. The segment at 470 to 550 (DFVGTAAHLV…VMALVGNDAG (81 aa)) is thiamine pyrophosphate binding. Asp-521 and Asn-547 together coordinate Mg(2+).

It belongs to the TPP enzyme family. Requires Mg(2+) as cofactor. Thiamine diphosphate is required as a cofactor. In terms of tissue distribution, expressed in all tissues tested, with highest expression in heart, pancreas and placenta.

The protein resides in the endoplasmic reticulum membrane. The enzyme catalyses 2-hydroxyoctadecanoyl-CoA = heptadecanal + formyl-CoA. It carries out the reaction (2R)-hydroxyhexadecanoyl-CoA = pentadecanal + formyl-CoA. Functionally, endoplasmic reticulum 2-OH acyl-CoA lyase involved in the cleavage (C1 removal) reaction in the fatty acid alpha-oxydation in a thiamine pyrophosphate (TPP)-dependent manner. Involved in the phytosphingosine degradation pathway. This is 2-hydroxyacyl-CoA lyase 2 from Homo sapiens (Human).